Here is a 249-residue protein sequence, read N- to C-terminus: Octanoyltransferase (249 aa).

The region spanning 53-234 (PDTDDEIWVV…RLIAHLDGAT (182 aa)) is the BPL/LPL catalytic domain. Substrate-binding positions include 93–100 (RGGQITYH), 165–167 (ALG), and 178–180 (GLS). The active-site Acyl-thioester intermediate is Cys196.

The protein belongs to the LipB family.

The protein localises to the cytoplasm. The enzyme catalyses octanoyl-[ACP] + L-lysyl-[protein] = N(6)-octanoyl-L-lysyl-[protein] + holo-[ACP] + H(+). Its pathway is protein modification; protein lipoylation via endogenous pathway; protein N(6)-(lipoyl)lysine from octanoyl-[acyl-carrier-protein]: step 1/2. Catalyzes the transfer of endogenously produced octanoic acid from octanoyl-acyl-carrier-protein onto the lipoyl domains of lipoate-dependent enzymes. Lipoyl-ACP can also act as a substrate although octanoyl-ACP is likely to be the physiological substrate. This Burkholderia mallei (strain NCTC 10247) protein is Octanoyltransferase.